The sequence spans 457 residues: Alkylcitrate synthase phiJ (457 aa).

Residues His-328 and Asp-384 contribute to the active site.

This sequence belongs to the citrate synthase family.

It carries out the reaction (2E,10E)-dode-2,10-dicenoyl-CoA + oxaloacetate + H2O = (4E,11E)-2-hydroxytrideca-4,11-dien-1,2,3-tricarboxylate + CoA + H(+). The protein operates within secondary metabolite biosynthesis. Its function is as follows. Alkylcitrate synthase; part of the gene cluster that mediates the biosynthesis of the antihypercholesterolemic agents phomoidrides which are dimeric anhydrides. Within the pathway, the alkylcitrate synthase (ACS) phiJ and the alkylcitrate dehydratase (ACDH) phiI produce the decarboxylated monomeric anhydrides by coupling the C12-fatty acyl product from phiA with oxalacetic acid. The pathway begins with the highly reducing polyketide synthase phiA that catalyzes the formation of a C12-fatty acyl-ACP, starting from one acetate and 5 malonate units. The hydrolase phiM is involved in the release of the C12-fatty acyl chain from phiA. The alkylcitrate synthase (ACS) phiJ and the alkylcitrate dehydratase (ACDH) phiI then give rise to decarboxylated monomeric anhydrides by coupling the C12-fatty acyl chain with oxalacetic acid. The cyclase phiC is responsible for the dimerization of the monomeric anhydrides which leads to the production of prephomoidride that contains the characteristic bicyclo[4.3.1]deca-1,6-diene system of phomoidrides. Iterative oxidation catalyzed by the alpha-ketoglutarate-dependent dioxygenase phiK produced then phomoidride A. Finally, the methyltransferase phiE converts phomoidride A to phomoidride B via an acetalization reaction. The phosphatidylethanolamine-binding protein phiB and phiN are not essential for dimerization and their functions have still to be determined. The chain is Alkylcitrate synthase phiJ from Fungal sp. (strain ATCC 74256).